The sequence spans 236 residues: MATGLLAKKLGMTQIFTAEGDCIPVTVLEAGPCTVVRRKTAEKDGYDAVVIGWGEVDEKHAHRLTKPEVGVFKKAGTPVFRHVKEIRVKDAKLLGELKAGDVLTVDKVFKQDQRIDVAGVTKGRGFTGVMKRWNMHGAARDSSTTHEHHRHVGAIGQRKTPGKVWKGKHLPGHYGVDNVTIQNLTIVGVEADKNLLLVKGAVPGHNDGLLFVNTAVKGQPRVKKVQEVRARAKPKV.

The interval 139 to 163 (ARDSSTTHEHHRHVGAIGQRKTPGK) is disordered.

This sequence belongs to the universal ribosomal protein uL3 family. Part of the 50S ribosomal subunit. Forms a cluster with proteins L14 and L19.

In terms of biological role, one of the primary rRNA binding proteins, it binds directly near the 3'-end of the 23S rRNA, where it nucleates assembly of the 50S subunit. This chain is Large ribosomal subunit protein uL3, found in Anaeromyxobacter sp. (strain Fw109-5).